Reading from the N-terminus, the 427-residue chain is Peptidase B (427 aa).

Residues K195 and D200 each contribute to the Mn(2+) site. The active site involves K207. Residues D218, D277, and E279 each coordinate Mn(2+). Residue R281 is part of the active site.

It belongs to the peptidase M17 family. In terms of assembly, homohexamer. The cofactor is Mn(2+).

The protein resides in the cytoplasm. The catalysed reaction is Release of an N-terminal amino acid, Xaa, from a peptide or arylamide. Xaa is preferably Glu or Asp but may be other amino acids, including Leu, Met, His, Cys and Gln.. Its function is as follows. Probably plays an important role in intracellular peptide degradation. This Escherichia coli O7:K1 (strain IAI39 / ExPEC) protein is Peptidase B.